Reading from the N-terminus, the 133-residue chain is Small ribosomal subunit protein uS8 (133 aa).

This sequence belongs to the universal ribosomal protein uS8 family. Part of the 30S ribosomal subunit. Contacts proteins S5 and S12.

Functionally, one of the primary rRNA binding proteins, it binds directly to 16S rRNA central domain where it helps coordinate assembly of the platform of the 30S subunit. The chain is Small ribosomal subunit protein uS8 from Leptospira borgpetersenii serovar Hardjo-bovis (strain JB197).